We begin with the raw amino-acid sequence, 74 residues long: Protein krueppel (74 aa).

C2H2-type zinc fingers lie at residues 1–4, 10–32, 38–60, and 66–74; these read ERTH, FECQ…MRLH, YRCE…LRVH, and YGCEHCSMK.

The protein belongs to the krueppel C2H2-type zinc-finger protein family.

The protein resides in the nucleus. In terms of biological role, krueppel is a gap class segmentation protein. This is Protein krueppel (Kr) from Tribolium castaneum (Red flour beetle).